The chain runs to 119 residues: UPF0231 protein ECA3777 (119 aa).

Belongs to the UPF0231 family.

This chain is UPF0231 protein ECA3777, found in Pectobacterium atrosepticum (strain SCRI 1043 / ATCC BAA-672) (Erwinia carotovora subsp. atroseptica).